Here is a 162-residue protein sequence, read N- to C-terminus: uncharacterized protein (162 aa).

A signal peptide spans 1-24; that stretch reads MCKRFKFLLAVSALFISITVVLAG. C25 carries N-palmitoyl cysteine lipidation. A lipid anchor (S-diacylglycerol cysteine) is attached at C25.

The protein localises to the cell membrane. This is an uncharacterized protein from Bacillus anthracis.